The following is a 308-amino-acid chain: Peroxisomal targeting signal 2 receptor (308 aa).

WD repeat units follow at residues 57–88 (DVEDSLFGVRWSQNCENQVYACCGDGSLRLFD), 101–132 (EHKAEIVAIDTNTVDRRIVVTGSWDGTIKLWL), 145–176 (GSNSRILTVATHYSSPNLLGYTSSDGLCKFWD), 187–218 (EIPNQITCMNWSKSNHRMVYTADNNNLVYCYD), 231–262 (GHQLAVRSIKSSNSAHDLLATASYDMTSRIFD), and 274–306 (LHSEFVRDVDWSDFGDGSWIASVGWDESLYIWN).

The protein belongs to the WD repeat peroxin-7 family. As to quaternary structure, interacts with PEX21.

It is found in the cytoplasm. It localises to the cytosol. The protein localises to the peroxisome matrix. Its function is as follows. Receptor required for the peroxisomal import of proteins containing a C-terminal PTS2-type peroxisomal targeting signal, such as 3-oxoacyl-CoA thiolase. Specifically binds to cargo proteins containing a PTS2 peroxisomal targeting signal in the cytosol. Cargo protein-binding triggers interaction with PEX21 and formation of a ternary complex composed of PEX21 and PEX7 along with PTS2-containing cargo proteins, which is tranlocated into peroxisomes by passing through the PEX13-PEX14 docking complex. In Schizosaccharomyces pombe (strain 972 / ATCC 24843) (Fission yeast), this protein is Peroxisomal targeting signal 2 receptor (pex7).